Reading from the N-terminus, the 95-residue chain is Defensin-A3 (95 aa).

Residues 1–19 (MRTLGLLLALLFLAAQTPA) form the signal peptide. Positions 20–61 (QLMGEEAEEATGRPEATEAQEAAAALMAARAADRHVTDPEQQ) are excised as a propeptide. 3 disulfide bridges follow: C66–C93, C68–C82, and C72–C92.

It belongs to the alpha-defensin family. As to expression, highly expressed in spleen, and expressed at lower levels in intestin and lung.

Its subcellular location is the secreted. Has antimicrobial activity. The protein is Defensin-A3 of Ornithorhynchus anatinus (Duckbill platypus).